Here is an 82-residue protein sequence, read N- to C-terminus: Sec-independent protein translocase protein TatA (82 aa).

Residues Met1–Gly21 traverse the membrane as a helical segment.

It belongs to the TatA/E family. As to quaternary structure, the Tat system comprises two distinct complexes: a TatABC complex, containing multiple copies of TatA, TatB and TatC subunits, and a separate TatA complex, containing only TatA subunits. Substrates initially bind to the TatABC complex, which probably triggers association of the separate TatA complex to form the active translocon.

It localises to the cell inner membrane. Functionally, part of the twin-arginine translocation (Tat) system that transports large folded proteins containing a characteristic twin-arginine motif in their signal peptide across membranes. TatA could form the protein-conducting channel of the Tat system. This chain is Sec-independent protein translocase protein TatA, found in Vibrio cholerae serotype O1 (strain ATCC 39315 / El Tor Inaba N16961).